Consider the following 394-residue polypeptide: 4-hydroxyphenylpyruvate dioxygenase (394 aa).

VOC domains lie at 27–161 and 193–351; these read GYDH…LIER and HIDH…LFTK. The Fe cation site is built by His-196, His-279, and Glu-362.

It belongs to the 4HPPD family. The cofactor is Fe cation.

It carries out the reaction 3-(4-hydroxyphenyl)pyruvate + O2 = homogentisate + CO2. It participates in amino-acid degradation; L-phenylalanine degradation; acetoacetate and fumarate from L-phenylalanine: step 3/6. The polypeptide is 4-hydroxyphenylpyruvate dioxygenase (Yarrowia lipolytica (strain CLIB 122 / E 150) (Yeast)).